The chain runs to 531 residues: Peptide chain release factor 3 (531 aa).

The tr-type G domain occupies Arg-10 to Lys-278. GTP-binding positions include Ser-19 to Thr-26, Asp-87 to His-91, and Asn-141 to Asp-144.

Belongs to the TRAFAC class translation factor GTPase superfamily. Classic translation factor GTPase family. PrfC subfamily.

The protein resides in the cytoplasm. In terms of biological role, increases the formation of ribosomal termination complexes and stimulates activities of RF-1 and RF-2. It binds guanine nucleotides and has strong preference for UGA stop codons. It may interact directly with the ribosome. The stimulation of RF-1 and RF-2 is significantly reduced by GTP and GDP, but not by GMP. The chain is Peptide chain release factor 3 from Neisseria gonorrhoeae (strain ATCC 700825 / FA 1090).